Consider the following 149-residue polypeptide: Transcriptional repressor NrdR (149 aa).

A zinc finger spans residues 3 to 34 (CPFCSAVDTKVIDSRLVAEGHQVRRRRECLLC). Residues 49–139 (PRVIKSNGSR…VYRSFEDIRE (91 aa)) enclose the ATP-cone domain.

This sequence belongs to the NrdR family. Requires Zn(2+) as cofactor.

In terms of biological role, negatively regulates transcription of bacterial ribonucleotide reductase nrd genes and operons by binding to NrdR-boxes. This is Transcriptional repressor NrdR from Aeromonas salmonicida (strain A449).